The sequence spans 577 residues: Phosphoethanolamine transferase CptA (577 aa).

Helical transmembrane passes span 17 to 37 (LGWA…IIYL), 45 to 65 (GLRD…LFPG), 69 to 89 (VIAA…LSYY), 119 to 139 (YFSL…ILLW), and 154 to 174 (LVSF…NTFI).

The protein belongs to the phosphoethanolamine transferase family. EptC/CptA subfamily.

The protein resides in the cell inner membrane. The protein operates within bacterial outer membrane biogenesis; LPS core biosynthesis. Catalyzes the addition of a phosphoethanolamine moiety to the outer membrane lipopolysaccharide core. The protein is Phosphoethanolamine transferase CptA (cptA) of Salmonella typhimurium (strain LT2 / SGSC1412 / ATCC 700720).